Reading from the N-terminus, the 117-residue chain is Biofilm growth-associated repressor (117 aa).

Residues 20-114 (AMEKRATEVA…ALYAIFCAPE (95 aa)) enclose the HTH arsR-type domain. Positions 54-77 (VGELEAKLDIRQPTLSQQLGVLRE) form a DNA-binding region, H-T-H motif.

Represses an operon that comprises at least itself and blh. Binds to a palindromic AT-rich sequence spanning the -10 region of the blh promoter and blocks transcription of the operon. This Agrobacterium fabrum (strain C58 / ATCC 33970) (Agrobacterium tumefaciens (strain C58)) protein is Biofilm growth-associated repressor (bigR).